Consider the following 108-residue polypeptide: Small ribosomal subunit protein eS25B (108 aa).

A compositionally biased stretch (low complexity) spans 1 to 20 (MPPKQQLSKAAKAAAALAGG). The segment at 1 to 30 (MPPKQQLSKAAKAAAALAGGKKSKKKWSKK) is disordered. Position 2 is a n,N-dimethylproline; by NTM1 (Pro-2). Positions 21–30 (KKSKKKWSKK) are enriched in basic residues.

This sequence belongs to the eukaryotic ribosomal protein eS25 family. In terms of assembly, component of the small ribosomal subunit (SSU). Mature yeast ribosomes consist of a small (40S) and a large (60S) subunit. The 40S small subunit contains 1 molecule of ribosomal RNA (18S rRNA) and 33 different proteins (encoded by 57 genes). The large 60S subunit contains 3 rRNA molecules (25S, 5.8S and 5S rRNA) and 46 different proteins (encoded by 81 genes).

It localises to the cytoplasm. Component of the ribosome, a large ribonucleoprotein complex responsible for the synthesis of proteins in the cell. The small ribosomal subunit (SSU) binds messenger RNAs (mRNAs) and translates the encoded message by selecting cognate aminoacyl-transfer RNA (tRNA) molecules. The large subunit (LSU) contains the ribosomal catalytic site termed the peptidyl transferase center (PTC), which catalyzes the formation of peptide bonds, thereby polymerizing the amino acids delivered by tRNAs into a polypeptide chain. The nascent polypeptides leave the ribosome through a tunnel in the LSU and interact with protein factors that function in enzymatic processing, targeting, and the membrane insertion of nascent chains at the exit of the ribosomal tunnel. The polypeptide is Small ribosomal subunit protein eS25B (Saccharomyces cerevisiae (strain ATCC 204508 / S288c) (Baker's yeast)).